The chain runs to 904 residues: Pyrimidine pathway regulatory protein 1 (904 aa).

Positions methionine 1–serine 11 are enriched in basic residues. Residues methionine 1 to isoleucine 27 form a disordered region. Positions asparagine 12–aspartate 21 are enriched in basic and acidic residues. The Zn(2+) site is built by cysteine 34, cysteine 37, cysteine 44, cysteine 51, cysteine 54, and cysteine 61. Residues cysteine 34–cysteine 61 constitute a DNA-binding region (zn(2)-C6 fungal-type). The disordered stretch occupies residues glycine 883–phenylalanine 904.

Binds DNA as a homodimer.

Its subcellular location is the nucleus. In terms of biological role, positive regulator of URA1 and URA3 expression. This is Pyrimidine pathway regulatory protein 1 (PPR1) from Saccharomyces cerevisiae (strain ATCC 204508 / S288c) (Baker's yeast).